The primary structure comprises 352 residues: MSVPDRKRALEAAIAYIEKQFGAGSIMSLGKHSSAHEISTIKTGALSLDLALGIGGVPKGRIVEIFGPESSGKTTLATHIVANAQKMGGVAAYIDAEHALDPNYAALIGANINDLMISQPDCGEDALSIAELLARSGAVDVIVIDSVAALVPKSELEGEIGDVHVGLQARMMSQALRKLTATLARTNTCAIFINQIREKIGVSFGNPETTTGGRALKFYSSIRIDIRRIGSIKGGENFDIGNRIKVKVAKNKLAPPFRTAEFDILFNEGISSAGCIIDLAVEKNIIDKKGSWFNYQDRKLGQGREAVREELKRNKELFHELERCIYESVQASQVPAAACVDAESRQVAEAAK.

67 to 74 (GPESSGKT) is a binding site for ATP.

This sequence belongs to the RecA family.

The protein localises to the cytoplasm. Its function is as follows. Can catalyze the hydrolysis of ATP in the presence of single-stranded DNA, the ATP-dependent uptake of single-stranded DNA by duplex DNA, and the ATP-dependent hybridization of homologous single-stranded DNAs. It interacts with LexA causing its activation and leading to its autocatalytic cleavage. This Chlamydia trachomatis serovar A (strain ATCC VR-571B / DSM 19440 / HAR-13) protein is Protein RecA.